A 520-amino-acid polypeptide reads, in one-letter code: MEELQGYLEKDRSRPFLYPLLFXEYSYALAHDRGLKGSLFYEPTEVFGYDSKSSLALLKRFVIRIYQQNYFLSVVNDSNKNRFVSHHHNNFXYSHXYSQMISEGCAILVEIPFSLRLXSYFEKKEIPKSHNLRSIHSIFPLSEGXLLHLXHVSDILIPHPIHMGILVQILQCWIQDVPLLHFLRFFLHKYHNWNSFLITPKKSIYVFSKENKRLFWFLYNSYVSECEFLLVFPRKQSSYLRLTSFGLFLERRHFHVKMEHLQMQHLILIVVCRDYFQGTLWSFKDPFMHYVRCQGKAVLASKGTHLLMKKWKYNFVNLWQYYFHFWYQSYRIHINQLSNYSFYFLGYLSSLLKNSLTVRNQMLENSFLMDTVTNKFETIVPVIFLIGSLSKAQFCTVSGHPISKPIWADLSDSEIIERFGRMCRNLSHYHSGSSKKQGLYRIKYILRLSCARTLARKHKSTVRTFLRRLGSGLLEEFFTEEEQVLSLILPKTIPFTFYGSHKERIWYLDIIRINDLVNHS.

The protein belongs to the intron maturase 2 family. MatK subfamily.

The protein localises to the plastid. Its subcellular location is the chloroplast. Usually encoded in the trnK tRNA gene intron. Probably assists in splicing its own and other chloroplast group II introns. The chain is Maturase K from Iris cristata (Dwarf crested iris).